Here is a 246-residue protein sequence, read N- to C-terminus: ATP synthase subunit a (246 aa).

Residues 1–3 (MFY) constitute a propeptide, removed in mature form. 7 consecutive transmembrane segments (helical) span residues 21–41 (LTFSITNYTLYLIIVSLIIIF), 56–76 (WGVSVIAIYDTILNLVNGQIG), 82–102 (YFPLIFTIFNFILIANLISMI), 113–133 (VAVVSFSLTLWIGNVVLGLYL), 138–158 (FFALFVPSGTPLALVPVLVLI), 184–204 (LMLILGSLIISLMSSSFLGFV), and 206–226 (GIIPILAVVAITILEFGIAII).

This sequence belongs to the ATPase A chain family. In terms of assembly, F-type ATPases have 2 components, CF(1) - the catalytic core - and CF(0) - the membrane proton channel. CF(1) has five subunits: alpha(3), beta(3), gamma(1), delta(1), epsilon(1). CF(0) has three main subunits: a, b and c.

The protein resides in the mitochondrion inner membrane. Mitochondrial membrane ATP synthase (F(1)F(0) ATP synthase or Complex V) produces ATP from ADP in the presence of a proton gradient across the membrane which is generated by electron transport complexes of the respiratory chain. F-type ATPases consist of two structural domains, F(1) - containing the extramembraneous catalytic core and F(0) - containing the membrane proton channel, linked together by a central stalk and a peripheral stalk. During catalysis, ATP synthesis in the catalytic domain of F(1) is coupled via a rotary mechanism of the central stalk subunits to proton translocation. Key component of the proton channel; it may play a direct role in the translocation of protons across the membrane. The sequence is that of ATP synthase subunit a (ATP6) from Candida parapsilosis (Yeast).